We begin with the raw amino-acid sequence, 252 residues long: Sulfate transporter CysZ (252 aa).

Transmembrane regions (helical) follow at residues 29–49 (FVLLPLIANVLLVGGALFYIF), 66–86 (FLSWLSYILWPLLVLTVLATF), 141–160 (LVYILPKAIGLFLLLLIPAL), 164–186 (VAPFLWFIFTAWMLAIQYADYPF), and 212–232 (ALVSVFTTIPVLNLIVMPVAV).

This sequence belongs to the CysZ family.

The protein localises to the cell inner membrane. Functionally, high affinity, high specificity proton-dependent sulfate transporter, which mediates sulfate uptake. Provides the sulfur source for the cysteine synthesis pathway. The sequence is that of Sulfate transporter CysZ from Vibrio atlanticus (strain LGP32) (Vibrio splendidus (strain Mel32)).